An 877-amino-acid chain; its full sequence is Phosphoenolpyruvate carboxylase (877 aa).

Catalysis depends on residues H138 and K543.

This sequence belongs to the PEPCase type 1 family. Mg(2+) is required as a cofactor.

The enzyme catalyses oxaloacetate + phosphate = phosphoenolpyruvate + hydrogencarbonate. Functionally, forms oxaloacetate, a four-carbon dicarboxylic acid source for the tricarboxylic acid cycle. The protein is Phosphoenolpyruvate carboxylase of Aeromonas hydrophila subsp. hydrophila (strain ATCC 7966 / DSM 30187 / BCRC 13018 / CCUG 14551 / JCM 1027 / KCTC 2358 / NCIMB 9240 / NCTC 8049).